Here is a 614-residue protein sequence, read N- to C-terminus: UvrABC system protein C (614 aa).

The region spanning 12 to 91 is the GIY-YIG domain; that stretch reads ESPGVYLMKG…IKKHRPRYNL (80 aa). The UVR domain occupies 201-236; the sequence is RDLLKTYRERMASAAANERYEEAARYRDLIRAIEVT.

This sequence belongs to the UvrC family. As to quaternary structure, interacts with UvrB in an incision complex.

It localises to the cytoplasm. Its function is as follows. The UvrABC repair system catalyzes the recognition and processing of DNA lesions. UvrC both incises the 5' and 3' sides of the lesion. The N-terminal half is responsible for the 3' incision and the C-terminal half is responsible for the 5' incision. The protein is UvrABC system protein C of Geobacter metallireducens (strain ATCC 53774 / DSM 7210 / GS-15).